The following is a 367-amino-acid chain: NADH-quinone oxidoreductase subunit D (367 aa).

Belongs to the complex I 49 kDa subunit family. NDH-1 is composed of 14 different subunits. Subunits NuoB, C, D, E, F, and G constitute the peripheral sector of the complex.

It localises to the cell membrane. It carries out the reaction a quinone + NADH + 5 H(+)(in) = a quinol + NAD(+) + 4 H(+)(out). Functionally, NDH-1 shuttles electrons from NADH, via FMN and iron-sulfur (Fe-S) centers, to quinones in the respiratory chain. The immediate electron acceptor for the enzyme in this species is believed to be ubiquinone. Couples the redox reaction to proton translocation (for every two electrons transferred, four hydrogen ions are translocated across the cytoplasmic membrane), and thus conserves the redox energy in a proton gradient. The polypeptide is NADH-quinone oxidoreductase subunit D (Dehalococcoides mccartyi (strain CBDB1)).